We begin with the raw amino-acid sequence, 275 residues long: Large ribosomal subunit protein uL2 (275 aa).

Residues 220–275 (QTRGAAMNPVDHPHGGGEGKTGSSGHPVSPWGMPAKGFKTRKKKASDKLIISRRKK) form a disordered region. Residues 257–275 (FKTRKKKASDKLIISRRKK) are compositionally biased toward basic residues.

Belongs to the universal ribosomal protein uL2 family. As to quaternary structure, part of the 50S ribosomal subunit. Forms a bridge to the 30S subunit in the 70S ribosome.

One of the primary rRNA binding proteins. Required for association of the 30S and 50S subunits to form the 70S ribosome, for tRNA binding and peptide bond formation. It has been suggested to have peptidyltransferase activity; this is somewhat controversial. Makes several contacts with the 16S rRNA in the 70S ribosome. The chain is Large ribosomal subunit protein uL2 from Wolinella succinogenes (strain ATCC 29543 / DSM 1740 / CCUG 13145 / JCM 31913 / LMG 7466 / NCTC 11488 / FDC 602W) (Vibrio succinogenes).